The primary structure comprises 52 residues: Sperm protamine P1 (52 aa).

Residues 1 to 27 (MARYSCCRSHSRSRSRRRRQRCRRRRR) form a disordered region. A compositionally biased stretch (basic residues) spans 9-27 (SHSRSRSRRRRQRCRRRRR).

The protein belongs to the protamine P1 family. Testis.

The protein localises to the nucleus. It is found in the chromosome. Functionally, protamines substitute for histones in the chromatin of sperm during the haploid phase of spermatogenesis. They compact sperm DNA into a highly condensed, stable and inactive complex. In Rhinolophus ferrumequinum (Greater horseshoe bat), this protein is Sperm protamine P1 (PRM1).